Reading from the N-terminus, the 539-residue chain is Alpha-copaene synthase (539 aa).

Residues D290 and D294 each contribute to the Mg(2+) site. Residues D290, D294, and R432 each contribute to the substrate site. Residues 290–294 carry the DDXXD motif motif; sequence DDTFD.

This sequence belongs to the terpene synthase family. Monomer. Requires Mg(2+) as cofactor. Mn(2+) is required as a cofactor.

The protein localises to the cytoplasm. The catalysed reaction is (2E,6E)-farnesyl diphosphate = alpha-copaene + diphosphate. It catalyses the reaction (2E,6E)-farnesyl diphosphate = (+)-germacrene D + diphosphate. The enzyme catalyses (2E,6E)-farnesyl diphosphate = (-)-(E)-beta-caryophyllene + diphosphate. It carries out the reaction (2E,6E)-farnesyl diphosphate = delta-cadinene + diphosphate. It participates in secondary metabolite biosynthesis; terpenoid biosynthesis. Converts farnesyl diphosphate to the bicyclic olefins alpha-copaene, (E)-beta-caryophyllene, and to the macrocyclic sesquiterpene germacrene D. Also mediates the biosynthesis of minor sesquiterpene hydrocarbons including delta-cadinene. Involved in indirect defense by producing volatile signals attracting natural enemies of herbivores. The sequence is that of Alpha-copaene synthase from Zea mays (Maize).